The following is a 137-amino-acid chain: Proofreading thioesterase EntH (137 aa).

E63 (nucleophile or proton acceptor) is an active-site residue.

It belongs to the thioesterase PaaI family. As to quaternary structure, homotetramer. Dimer of dimers. Interacts specifically with the aryl carrier protein (ArCP) domain of EntB.

It localises to the cytoplasm. It participates in siderophore biosynthesis; enterobactin biosynthesis. Required for optimal enterobactin synthesis. Acts as a proofreading enzyme that prevents EntB misacylation by hydrolyzing the thioester bound existing between EntB and wrongly charged molecules. The polypeptide is Proofreading thioesterase EntH (Escherichia coli O6:H1 (strain CFT073 / ATCC 700928 / UPEC)).